The following is a 239-amino-acid chain: Probable transcriptional regulatory protein BBR47_14810 (239 aa).

This sequence belongs to the TACO1 family. YeeN subfamily.

It localises to the cytoplasm. The protein is Probable transcriptional regulatory protein BBR47_14810 of Brevibacillus brevis (strain 47 / JCM 6285 / NBRC 100599).